The sequence spans 939 residues: Progesterone receptor (939 aa).

Residues 1-11 (MTERTGKDARA) show a composition bias toward basic and acidic residues. Residues 1–174 (MTERTGKDAR…RSSQGAACPL (174 aa)) form an AF3; mediates transcriptional activation (in isoform B) region. The disordered stretch occupies residues 1–302 (MTERTGKDAR…AEQDAPAPGC (302 aa)). Positions 1 to 572 (MTERTGKDAR…YSFESLPQKI (572 aa)) are modulating, Ala/Pro-rich. K7 is covalently cross-linked (Glycyl lysine isopeptide (Lys-Gly) (interchain with G-Cter in SUMO)). The span at 15 to 26 (AGGAPSPAPAAE) shows a compositional bias: low complexity. S20 carries the phosphoserine modification. Positions 27 to 36 (PESRRRDGGR) are enriched in basic and acidic residues. A compositionally biased stretch (low complexity) spans 49-67 (AAAAAAAAAAASAAPSAPS). A Phosphoserine modification is found at S141. Residues 175 to 314 (MSRPEGKAGD…LATTMMDFIH (140 aa)) form a mediates transcriptional transrepression (in isoform A) region. The Nuclear localization signal signature appears at 193-197 (KGPPR). S200 is modified (phosphoserine). Low complexity-rich tracts occupy residues 211-230 (GAHA…AALG) and 257-278 (PAAA…TAPV). Phosphoserine; by MAPK1 is present on S303. S349 carries the phosphoserine; by MAPK modification. Residue K392 forms a Glycyl lysine isopeptide (Lys-Gly) (interchain with G-Cter in SUMO); alternate linkage. A Glycyl lysine isopeptide (Lys-Gly) (interchain with G-Cter in ubiquitin); alternate cross-link involves residue K392. Residue S404 is modified to Phosphoserine; by CDK2. Residues 463 to 552 (PALECVLYKA…VYQPYLNYLR (90 aa)) are AF1; mediates transcriptional activation. K537 participates in a covalent cross-link: Glycyl lysine isopeptide (Lys-Gly) (interchain with G-Cter in SUMO). NR C4-type zinc fingers lie at residues 573-593 (CLIC…CGSC) and 609-633 (CAGR…LRKC). The nuclear receptor DNA-binding region spans 573–645 (CLICGDEASG…AGMVLGGRKF (73 aa)). S682 is subject to Phosphoserine. The NR LBD domain maps to 685-919 (QDIQLIPPLI…EFPEMMSEVI (235 aa)). An AF2; mediates transcriptional activation region spans residues 693–939 (LINLLMSIEP…MVKPLLFHKK (247 aa)).

The protein belongs to the nuclear hormone receptor family. NR3 subfamily. Interacts with SMARD1 and UNC45A. Interacts with CUEDC2; the interaction promotes ubiquitination, decreases sumoylation, and represses transcriptional activity. Interacts with PIAS3; the interaction promotes sumoylation of PR in a hormone-dependent manner, inhibits DNA-binding, and alters nuclear export. Interacts with SP1; the interaction requires ligand-induced phosphorylation on Ser-349 by ERK1/2-MAPK. Interacts with PRMT2. Isoform A interacts with NCOR2. Isoform B (but not isoform A) interacts with NCOA2 and NCOA1. Isoform B (but not isoform A) interacts with KLF9. Interacts with GTF2B. Post-translationally, phosphorylated on multiple serine sites. Several of these sites are hormone-dependent. Phosphorylation on Ser-303 occurs preferentially on isoform B, is highly hormone-dependent and modulates ubiquitination and sumoylation on Lys-392. Phosphorylation on Ser-303 and Ser-349 also requires induction by hormone. Basal phosphorylation on Ser-200 and Ser-404 is increased in response to progesterone and can be phosphorylated in vitro by the CDK2-A1 complex. Increased levels of phosphorylation on Ser-404 also in the presence of EGF, heregulin, IGF, PMA and FBS. Phosphorylation at this site by CDK2 is ligand-independent, and increases nuclear translocation and transcriptional activity. Phosphorylation at Ser-303, but not at Ser-200, is impaired during the G(2)/M phase of the cell cycle. Phosphorylation on Ser-349 by ERK1/2 MAPK is required for interaction with SP1. Sumoylation is hormone-dependent and represses transcriptional activity. Sumoylation on all three sites is enhanced by PIAS3. Desumoylated by SENP1. Sumoylation on Lys-392, the main site of sumoylation, is repressed by ubiquitination on the same site, and modulated by phosphorylation at Ser-303. In terms of processing, ubiquitination is hormone-dependent and represses sumoylation on the same site. Promoted by MAPK-mediated phosphorylation on Ser-303. Post-translationally, palmitoylated by ZDHHC7 and ZDHHC21. Palmitoylation is required for plasma membrane targeting and for rapid intracellular signaling via ERK and AKT kinases and cAMP generation. Expressed in mammary gland and uterus.

It localises to the nucleus. Its subcellular location is the cytoplasm. Its function is as follows. The steroid hormones and their receptors are involved in the regulation of eukaryotic gene expression and affect cellular proliferation and differentiation in target tissues. Depending on the isoform, progesterone receptor functions as a transcriptional activator or repressor. In terms of biological role, ligand-dependent transdominant repressor of steroid hormone receptor transcriptional activity including repression of its isoform B, MR and ER. Transrepressional activity may involve recruitment of corepressor NCOR2. Functionally, transcriptional activator of several progesteron-dependent promoters in a variety of cell types. Involved in activation of SRC-dependent MAPK signaling on hormone stimulation. In Canis lupus familiaris (Dog), this protein is Progesterone receptor (PGR).